A 352-amino-acid chain; its full sequence is MIVLFVDFDYFYAQVEEVLNPSLKGKPVVVCVFSGRFEDSGAVATANYEARKFGVKAGIPIVEAKKILPNAVYLPMRKEVYQQVSSRIMNLLREYSEKIEIASIDEAYLDISDKVRDYREAYNLGLEIKNKILEKEKITVTVGISKNKVFAKIAADMAKPNGIKVIDDEEVKRLIRELDIADVPGIGNITAEKLKKLGINKLVDTLSIEFDKLKGMIGEAKAKYLISLARDEYNEPIRTRVRKSIGRIVTMKRNSRNLEEIKPYLFRAIEESYYKLDKRIPKAIHVVAVTEDLDIVSRGRTFPHGISKETAYSESVKLLQKILEEDERKIRRIGVRFSKFIEAIGLDKFFDT.

The region spanning 3-187 is the UmuC domain; sequence VLFVDFDYFY…LDIADVPGIG (185 aa). 2 residues coordinate Mg(2+): aspartate 7 and aspartate 105. Glutamate 106 is an active-site residue.

Belongs to the DNA polymerase type-Y family. As to quaternary structure, monomer. Interacts with the PCNA heterotrimer via PCNA1. Requires Mg(2+) as cofactor.

The protein resides in the cytoplasm. It catalyses the reaction DNA(n) + a 2'-deoxyribonucleoside 5'-triphosphate = DNA(n+1) + diphosphate. In terms of biological role, poorly processive, error-prone DNA polymerase involved in untargeted mutagenesis. Copies undamaged DNA at stalled replication forks, which arise in vivo from mismatched or misaligned primer ends. These misaligned primers can be extended by PolIV. Exhibits no 3'-5' exonuclease (proofreading) activity. It is involved in translesional synthesis. The chain is DNA polymerase IV (dbh) from Saccharolobus solfataricus (strain ATCC 35092 / DSM 1617 / JCM 11322 / P2) (Sulfolobus solfataricus).